A 202-amino-acid polypeptide reads, in one-letter code: Segregation and condensation protein B (202 aa).

Belongs to the ScpB family. In terms of assembly, homodimer. Homodimerization may be required to stabilize the binding of ScpA to the Smc head domains. Component of a cohesin-like complex composed of ScpA, ScpB and the Smc homodimer, in which ScpA and ScpB bind to the head domain of Smc. The presence of the three proteins is required for the association of the complex with DNA.

Its subcellular location is the cytoplasm. Its function is as follows. Participates in chromosomal partition during cell division. May act via the formation of a condensin-like complex containing Smc and ScpA that pull DNA away from mid-cell into both cell halves. The protein is Segregation and condensation protein B of Clostridium acetobutylicum (strain ATCC 824 / DSM 792 / JCM 1419 / IAM 19013 / LMG 5710 / NBRC 13948 / NRRL B-527 / VKM B-1787 / 2291 / W).